Here is a 1495-residue protein sequence, read N- to C-terminus: VPS10 homolog 2 (1495 aa).

The first 21 residues, 1-21, serve as a signal peptide directing secretion; that stretch reads MALFRALYIIWVFLLIPLFNA. Topologically, residues 23 to 1369 are lumenal; that stretch reads EFTPKVTRTL…AFREKYPINT (1347 aa). BNR repeat units lie at residues 58–67 and 101–111; these read ISFDAGENWK and YVTDDQGKSWR. N148 is a glycosylation site (N-linked (GlcNAc...) asparagine). BNR repeat units follow at residues 229-238, 394-403, and 465-475; these read LSADGGETFK, VSVDNGLTWS, and FISRDSGLTWR. N-linked (GlcNAc...) asparagine glycosylation occurs at N479. BNR repeat units follow at residues 511–520 and 740–750; these read YYSLDQGKTW and YISHDGGQTIK. N769 carries an N-linked (GlcNAc...) asparagine glycan. A BNR 8 repeat occupies 837 to 847; it reads YLTKDGGETFT. An N-linked (GlcNAc...) asparagine glycan is attached at N986. 2 BNR repeats span residues 1119-1129 and 1161-1170; these read FLTTDGGETWT and YSTDFGKTWK. N-linked (GlcNAc...) asparagine glycosylation is present at N1279. A helical transmembrane segment spans residues 1370-1390; the sequence is GAYALVFVTILLVIFFAAWFV. Residues 1391–1495 lie on the Cytoplasmic side of the membrane; it reads YDRGIRRNGG…GTAQLSCFKI (105 aa).

The protein belongs to the VPS10-related sortilin family.

It is found in the golgi apparatus. Its subcellular location is the trans-Golgi network membrane. Functionally, functions as a sorting receptor in the Golgi compartment required for the intracellular sorting and delivery of soluble vacuolar proteins, like carboxypeptidase Y (CPY) and proteinase A. This Saccharomyces cerevisiae (strain Lalvin EC1118 / Prise de mousse) (Baker's yeast) protein is VPS10 homolog 2 (VTH2).